A 276-amino-acid polypeptide reads, in one-letter code: ATP synthase subunit a (276 aa).

The next 6 membrane-spanning stretches (helical) occupy residues 47–67 (WHID…WLFY), 107–127 (IAPL…MDLI), 152–172 (DLNV…FYSI), 188–208 (PFNH…TLVA), 226–246 (LIFI…SVPW), and 247–267 (AIFH…LTIV).

Belongs to the ATPase A chain family. In terms of assembly, F-type ATPases have 2 components, CF(1) - the catalytic core - and CF(0) - the membrane proton channel. CF(1) has five subunits: alpha(3), beta(3), gamma(1), delta(1), epsilon(1). CF(0) has three main subunits: a(1), b(2) and c(9-12). The alpha and beta chains form an alternating ring which encloses part of the gamma chain. CF(1) is attached to CF(0) by a central stalk formed by the gamma and epsilon chains, while a peripheral stalk is formed by the delta and b chains.

It is found in the cell inner membrane. Functionally, key component of the proton channel; it plays a direct role in the translocation of protons across the membrane. In Shewanella pealeana (strain ATCC 700345 / ANG-SQ1), this protein is ATP synthase subunit a.